The primary structure comprises 250 residues: 2,3-bisphosphoglycerate-dependent phosphoglycerate mutase (250 aa).

Residues R10–N17, T23–G24, R62, E89–Y92, K100, R116–R117, and G185–N186 each bind substrate. The active-site Tele-phosphohistidine intermediate is the H11. The Proton donor/acceptor role is filled by E89.

It belongs to the phosphoglycerate mutase family. BPG-dependent PGAM subfamily. In terms of assembly, homodimer.

The enzyme catalyses (2R)-2-phosphoglycerate = (2R)-3-phosphoglycerate. Its pathway is carbohydrate degradation; glycolysis; pyruvate from D-glyceraldehyde 3-phosphate: step 3/5. Functionally, catalyzes the interconversion of 2-phosphoglycerate and 3-phosphoglycerate. The sequence is that of 2,3-bisphosphoglycerate-dependent phosphoglycerate mutase from Edwardsiella ictaluri (strain 93-146).